Reading from the N-terminus, the 380-residue chain is Large ribosomal subunit protein mL38 (380 aa).

The N-terminal 26 residues, 1–26 (MAAPWWRAALCECRRWRGFSTSAVLG), are a transit peptide targeting the mitochondrion. The stretch at 99–127 (RTQQLLERKQAIQELRANVEEERAARLRT) forms a coiled coil.

This sequence belongs to the phosphatidylethanolamine-binding protein family. Mitochondrion-specific ribosomal protein mL38 subfamily. As to quaternary structure, component of the mitochondrial large ribosomal subunit (mt-LSU). Mature mammalian 55S mitochondrial ribosomes consist of a small (28S) and a large (39S) subunit. The 28S small subunit contains a 12S ribosomal RNA (12S mt-rRNA) and 30 different proteins. The 39S large subunit contains a 16S rRNA (16S mt-rRNA), a copy of mitochondrial valine transfer RNA (mt-tRNA(Val)), which plays an integral structural role, and 52 different proteins. mL38 is located at the central protuberance.

The protein localises to the mitochondrion. The chain is Large ribosomal subunit protein mL38 (MRPL38) from Homo sapiens (Human).